The chain runs to 101 residues: ATP-dependent Clp protease adapter protein ClpS (101 aa).

Belongs to the ClpS family. Binds to the N-terminal domain of the chaperone ClpA.

Functionally, involved in the modulation of the specificity of the ClpAP-mediated ATP-dependent protein degradation. The protein is ATP-dependent Clp protease adapter protein ClpS of Clostridium acetobutylicum (strain ATCC 824 / DSM 792 / JCM 1419 / IAM 19013 / LMG 5710 / NBRC 13948 / NRRL B-527 / VKM B-1787 / 2291 / W).